Consider the following 805-residue polypeptide: Sucrose synthase (805 aa).

Positions 275–752 (MVFNVVILSP…GLQRIEEKYT (478 aa)) are GT-B glycosyltransferase.

This sequence belongs to the glycosyltransferase 1 family. Plant sucrose synthase subfamily.

It carries out the reaction an NDP-alpha-D-glucose + D-fructose = a ribonucleoside 5'-diphosphate + sucrose + H(+). In terms of biological role, sucrose-cleaving enzyme that provides UDP-glucose and fructose for various metabolic pathways. In Medicago sativa (Alfalfa), this protein is Sucrose synthase.